The chain runs to 141 residues: Regulator of ribonuclease activity B (141 aa).

Residues 119–132 (DEDFDDEDDDEDYD) show a composition bias toward acidic residues. The interval 119-141 (DEDFDDEDDDEDYDKDGFPIERH) is disordered.

Belongs to the RraB family. As to quaternary structure, interacts with the C-terminal region of Rne.

It is found in the cytoplasm. Functionally, globally modulates RNA abundance by binding to RNase E (Rne) and regulating its endonucleolytic activity. Can modulate Rne action in a substrate-dependent manner by altering the composition of the degradosome. This chain is Regulator of ribonuclease activity B, found in Shewanella amazonensis (strain ATCC BAA-1098 / SB2B).